The chain runs to 243 residues: Carboxy-S-adenosyl-L-methionine synthase (243 aa).

S-adenosyl-L-methionine contacts are provided by residues Y40, 65–67 (GCS), 90–91 (DN), 118–119 (DI), N133, and R200.

Belongs to the class I-like SAM-binding methyltransferase superfamily. Cx-SAM synthase family. As to quaternary structure, homodimer.

The catalysed reaction is prephenate + S-adenosyl-L-methionine = carboxy-S-adenosyl-L-methionine + 3-phenylpyruvate + H2O. Catalyzes the conversion of S-adenosyl-L-methionine (SAM) to carboxy-S-adenosyl-L-methionine (Cx-SAM). This Shewanella sediminis (strain HAW-EB3) protein is Carboxy-S-adenosyl-L-methionine synthase.